The primary structure comprises 188 residues: Nicotinamide-nucleotide adenylyltransferase (188 aa).

It belongs to the archaeal NMN adenylyltransferase family.

It is found in the cytoplasm. It carries out the reaction beta-nicotinamide D-ribonucleotide + ATP + H(+) = diphosphate + NAD(+). The protein operates within cofactor biosynthesis; NAD(+) biosynthesis; NAD(+) from nicotinamide D-ribonucleotide: step 1/1. The sequence is that of Nicotinamide-nucleotide adenylyltransferase from Thermococcus kodakarensis (strain ATCC BAA-918 / JCM 12380 / KOD1) (Pyrococcus kodakaraensis (strain KOD1)).